The sequence spans 266 residues: 3-methyl-2-oxobutanoate hydroxymethyltransferase 2 (266 aa).

Asp45 and Asp84 together coordinate Mg(2+). 3-methyl-2-oxobutanoate-binding positions include 45–46, Asp84, and Lys112; that span reads DS. Residue Glu114 coordinates Mg(2+). Glu181 serves as the catalytic Proton acceptor.

It belongs to the PanB family. In terms of assembly, homodecamer; pentamer of dimers. Mg(2+) is required as a cofactor.

It localises to the cytoplasm. It catalyses the reaction 3-methyl-2-oxobutanoate + (6R)-5,10-methylene-5,6,7,8-tetrahydrofolate + H2O = 2-dehydropantoate + (6S)-5,6,7,8-tetrahydrofolate. The protein operates within cofactor biosynthesis; (R)-pantothenate biosynthesis; (R)-pantoate from 3-methyl-2-oxobutanoate: step 1/2. Catalyzes the reversible reaction in which hydroxymethyl group from 5,10-methylenetetrahydrofolate is transferred onto alpha-ketoisovalerate to form ketopantoate. The protein is 3-methyl-2-oxobutanoate hydroxymethyltransferase 2 of Pseudomonas aeruginosa (strain UCBPP-PA14).